Consider the following 490-residue polypeptide: ATP synthase subunit beta, chloroplastic (490 aa).

T6 bears the Phosphothreonine mark. Residue S13 is modified to Phosphoserine. 172-179 contributes to the ATP binding site; the sequence is GGAGVGKT.

This sequence belongs to the ATPase alpha/beta chains family. In terms of assembly, F-type ATPases have 2 components, CF(1) - the catalytic core - and CF(0) - the membrane proton channel. CF(1) has five subunits: alpha(3), beta(3), gamma(1), delta(1), epsilon(1). CF(0) has four main subunits: a(1), b(1), b'(1) and c(9-12).

It is found in the plastid. It localises to the chloroplast thylakoid membrane. It catalyses the reaction ATP + H2O + 4 H(+)(in) = ADP + phosphate + 5 H(+)(out). Produces ATP from ADP in the presence of a proton gradient across the membrane. The catalytic sites are hosted primarily by the beta subunits. This Aethionema cordifolium (Lebanon stonecress) protein is ATP synthase subunit beta, chloroplastic.